The following is an 842-amino-acid chain: Ionotropic receptor 21a (842 aa).

Residues M1–A15 form the signal peptide. N-linked (GlcNAc...) asparagine glycosylation occurs at N325. 2 helical membrane-spanning segments follow: residues W405–T425 and W437–F457. N469 is a glycosylation site (N-linked (GlcNAc...) asparagine). The chain crosses the membrane as a helical span at residues W479–L499. N533, N558, N583, and N588 each carry an N-linked (GlcNAc...) asparagine glycan. Residues M680–V700 form a helical membrane-spanning segment. The segment at W722–A745 is disordered. Residues N765 and N797 are each glycosylated (N-linked (GlcNAc...) asparagine).

This sequence belongs to the glutamate-gated ion channel (TC 1.A.10.1) family. As to expression, expressed in the dorsal organ cool cells. In the antenna, expressed in approximately six neurons in the arista as well as five to ten neurons near the third chamber of the sacculus.

Its subcellular location is the cell membrane. In terms of biological role, integral part of a neural sensory system in the antenna that provides the neural basis for the response to environmental changes in temperature (thermosensation). Together with Ir25a and Ir93a, mediates the response of the dorsal organ cool cells, a trio of cool-responsive neurons, to cooling and is required for cool avoidance behavior. The protein is Ionotropic receptor 21a of Drosophila melanogaster (Fruit fly).